The sequence spans 245 residues: tRNA pseudouridine synthase A 2 (245 aa).

D53 acts as the Nucleophile in catalysis. Position 111 (Y111) interacts with substrate.

This sequence belongs to the tRNA pseudouridine synthase TruA family. Homodimer.

It carries out the reaction uridine(38/39/40) in tRNA = pseudouridine(38/39/40) in tRNA. Formation of pseudouridine at positions 38, 39 and 40 in the anticodon stem and loop of transfer RNAs. This chain is tRNA pseudouridine synthase A 2, found in Bacillus anthracis.